A 299-amino-acid chain; its full sequence is ATP phosphoribosyltransferase (299 aa).

It belongs to the ATP phosphoribosyltransferase family. Long subfamily. Mg(2+) is required as a cofactor.

The protein resides in the cytoplasm. The enzyme catalyses 1-(5-phospho-beta-D-ribosyl)-ATP + diphosphate = 5-phospho-alpha-D-ribose 1-diphosphate + ATP. It participates in amino-acid biosynthesis; L-histidine biosynthesis; L-histidine from 5-phospho-alpha-D-ribose 1-diphosphate: step 1/9. Its activity is regulated as follows. Feedback inhibited by histidine. Functionally, catalyzes the condensation of ATP and 5-phosphoribose 1-diphosphate to form N'-(5'-phosphoribosyl)-ATP (PR-ATP). Has a crucial role in the pathway because the rate of histidine biosynthesis seems to be controlled primarily by regulation of HisG enzymatic activity. The protein is ATP phosphoribosyltransferase of Shewanella sp. (strain MR-7).